A 196-amino-acid chain; its full sequence is Thymidine kinase (196 aa).

17 to 24 (GPMFAGKT) serves as a coordination point for ATP. Glu92 (proton acceptor) is an active-site residue. Residue Phe121 coordinates substrate. Residues Cys146 and Cys149 each coordinate Zn(2+). 166–170 (LILAG) contacts substrate. Zn(2+) is bound by residues Cys179 and Cys182.

The protein belongs to the thymidine kinase family.

The catalysed reaction is thymidine + ATP = dTMP + ADP + H(+). In terms of biological role, phosphorylates thymidine. ASFV replicates in the cytoplasm of infected cells and contains genes encoding a number of enzymes needed for DNA synthesis, including thymidine kinase. Important for growth in swine macrophages in vitro and is a virus virulence factor in swine. The polypeptide is Thymidine kinase (Ornithodoros (relapsing fever ticks)).